Reading from the N-terminus, the 117-residue chain is Large ribosomal subunit protein uL18 (117 aa).

The protein belongs to the universal ribosomal protein uL18 family. As to quaternary structure, part of the 50S ribosomal subunit; part of the 5S rRNA/L5/L18/L25 subcomplex. Contacts the 5S and 23S rRNAs.

In terms of biological role, this is one of the proteins that bind and probably mediate the attachment of the 5S RNA into the large ribosomal subunit, where it forms part of the central protuberance. This chain is Large ribosomal subunit protein uL18, found in Leuconostoc citreum (strain KM20).